Reading from the N-terminus, the 205-residue chain is ATP-dependent Clp protease proteolytic subunit (205 aa).

Ser98 acts as the Nucleophile in catalysis. His123 is an active-site residue.

This sequence belongs to the peptidase S14 family. Fourteen ClpP subunits assemble into 2 heptameric rings which stack back to back to give a disk-like structure with a central cavity, resembling the structure of eukaryotic proteasomes.

It localises to the cytoplasm. The catalysed reaction is Hydrolysis of proteins to small peptides in the presence of ATP and magnesium. alpha-casein is the usual test substrate. In the absence of ATP, only oligopeptides shorter than five residues are hydrolyzed (such as succinyl-Leu-Tyr-|-NHMec, and Leu-Tyr-Leu-|-Tyr-Trp, in which cleavage of the -Tyr-|-Leu- and -Tyr-|-Trp bonds also occurs).. Functionally, cleaves peptides in various proteins in a process that requires ATP hydrolysis. Has a chymotrypsin-like activity. Plays a major role in the degradation of misfolded proteins. In Desulfosudis oleivorans (strain DSM 6200 / JCM 39069 / Hxd3) (Desulfococcus oleovorans), this protein is ATP-dependent Clp protease proteolytic subunit.